The sequence spans 200 residues: Peptidyl-tRNA hydrolase (200 aa).

Tyr16 contacts tRNA. His21 functions as the Proton acceptor in the catalytic mechanism. TRNA-binding residues include Phe67, Asn69, and Asn115.

It belongs to the PTH family. As to quaternary structure, monomer.

It is found in the cytoplasm. The catalysed reaction is an N-acyl-L-alpha-aminoacyl-tRNA + H2O = an N-acyl-L-amino acid + a tRNA + H(+). Its function is as follows. Hydrolyzes ribosome-free peptidyl-tRNAs (with 1 or more amino acids incorporated), which drop off the ribosome during protein synthesis, or as a result of ribosome stalling. In terms of biological role, catalyzes the release of premature peptidyl moieties from peptidyl-tRNA molecules trapped in stalled 50S ribosomal subunits, and thus maintains levels of free tRNAs and 50S ribosomes. In Prochlorococcus marinus (strain AS9601), this protein is Peptidyl-tRNA hydrolase.